We begin with the raw amino-acid sequence, 276 residues long: Probable ribose-5-phosphate isomerase 3, chloroplastic (276 aa).

Residues 1 to 39 constitute a chloroplast transit peptide; the sequence is MASLSFVSSSHLTLRTPSIALRSTGSSPRTSVSFSVKAQ. Position 40 is an N-acetylserine (Ser40). Ser108 is modified (phosphoserine).

Belongs to the ribose 5-phosphate isomerase family. Phosphorylated by SRK2C.

It localises to the plastid. The protein resides in the chloroplast. The catalysed reaction is aldehydo-D-ribose 5-phosphate = D-ribulose 5-phosphate. Its pathway is carbohydrate degradation; pentose phosphate pathway; D-ribose 5-phosphate from D-ribulose 5-phosphate (non-oxidative stage): step 1/1. Functionally, catalyzes the reversible conversion of ribose-5-phosphate to ribulose 5-phosphate. In Arabidopsis thaliana (Mouse-ear cress), this protein is Probable ribose-5-phosphate isomerase 3, chloroplastic (RPI3).